Consider the following 741-residue polypeptide: Eukaryotic peptide chain release factor GTP-binding subunit (741 aa).

Positions 5-135 are several sort of repeats; that stretch reads QQQQQQFNAN…SYNNNNNYNN (131 aa). A compositionally biased stretch (low complexity) spans 59 to 161; that stretch reads QQFGQYGQQQ…DQQQETGSGQ (103 aa). Disordered regions lie at residues 59–186 and 199–264; these read QQFG…KKVL and IVTK…KTEA. Residues 162–311 are charged; the sequence is MSLEDYQKQQ…EQIDASIVND (150 aa). Basic and acidic residues-rich tracts occupy residues 166 to 175 and 202 to 241; these read DYQKQQKESL and KKKE…ESKV. The region spanning 316–541 is the tr-type G domain; sequence KDHMSIIFMG…YLDSMPLAVR (226 aa). A G1 region spans residues 325–332; that stretch reads GHVDAGKS. Position 325-332 (325-332) interacts with GTP; that stretch reads GHVDAGKS. The interval 381–385 is G2; it reads GKTIE. At Thr399 the chain carries Phosphothreonine. Residues 402-405 form a G3 region; it reads DAPG. Residues 402 to 406 and 464 to 467 contribute to the GTP site; these read DAPGH and NKMD. Residues 464-467 form a G4 region; the sequence is NKMD. The G5 stretch occupies residues 505–507; sequence SGY.

It belongs to the TRAFAC class translation factor GTPase superfamily. Classic translation factor GTPase family. ERF3 subfamily.

Its subcellular location is the cytoplasm. Its function is as follows. Involved in translation termination. Stimulates the activity of ERF1. Binds guanine nucleotides. The polypeptide is Eukaryotic peptide chain release factor GTP-binding subunit (SUP2) (Ogataea pini (Yeast)).